Consider the following 550-residue polypeptide: Hydroxylamine reductase (550 aa).

[2Fe-2S] cluster is bound by residues cysteine 3, cysteine 6, cysteine 18, and cysteine 25. Residues histidine 249, glutamate 273, cysteine 317, cysteine 405, cysteine 433, cysteine 458, glutamate 492, and lysine 494 each coordinate hybrid [4Fe-2O-2S] cluster. Position 405 is a cysteine persulfide (cysteine 405).

Belongs to the HCP family. Requires [2Fe-2S] cluster as cofactor. Hybrid [4Fe-2O-2S] cluster is required as a cofactor.

It localises to the cytoplasm. The catalysed reaction is A + NH4(+) + H2O = hydroxylamine + AH2 + H(+). Catalyzes the reduction of hydroxylamine to form NH(3) and H(2)O. The protein is Hydroxylamine reductase of Escherichia coli (strain SE11).